A 126-amino-acid chain; its full sequence is Probable small nuclear ribonucleoprotein Sm D1 (126 aa).

One can recognise a Sm domain in the interval Lys-2–Leu-74. Residues Arg-86 to Arg-126 are disordered. Residues Gly-99–Arg-126 are compositionally biased toward basic residues.

This sequence belongs to the snRNP core protein family.

The protein resides in the nucleus. It localises to the cytoplasm. It is found in the cytosol. Functionally, plays a role in pre-mRNA splicing as a core component of the spliceosomal U1, U2, U4 and U5 small nuclear ribonucleoproteins (snRNPs), the building blocks of the spliceosome. The sequence is that of Probable small nuclear ribonucleoprotein Sm D1 (snr-3) from Caenorhabditis elegans.